The primary structure comprises 269 residues: Indole-3-glycerol phosphate synthase (269 aa).

It belongs to the TrpC family.

The catalysed reaction is 1-(2-carboxyphenylamino)-1-deoxy-D-ribulose 5-phosphate + H(+) = (1S,2R)-1-C-(indol-3-yl)glycerol 3-phosphate + CO2 + H2O. It functions in the pathway amino-acid biosynthesis; L-tryptophan biosynthesis; L-tryptophan from chorismate: step 4/5. The sequence is that of Indole-3-glycerol phosphate synthase from Roseiflexus castenholzii (strain DSM 13941 / HLO8).